A 111-amino-acid polypeptide reads, in one-letter code: uncharacterized protein (111 aa).

The chain crosses the membrane as a helical span at residues 64-86; the sequence is VLCWLVLPLYCCNLLNLFFNIFL.

Its subcellular location is the membrane. This is an uncharacterized protein from Saccharomyces cerevisiae (strain ATCC 204508 / S288c) (Baker's yeast).